The primary structure comprises 968 residues: MSSTTTVAEFAAELNKPTATLIEQLTSAGVAKVQASDHLSEVDKQKLLGYLQASHGTVTAERKKITLVKKSTTEIKQADATGKARTIQVEVRKKRTFVKREDGSDLPAEEVQPEVVAAPQVPVIDDAELIRREEEASRHAELLRRQEAELAEKRRLREELDAKEAARELERQAAAESAKAAAEAAEAAKKAKPVTGKAKEVAQPAGAEASRAAAETAVAEEAAATKAADAAVVQAAAKAKATAEFQADAAKAQDLQERRRKAEAEAAGIRAMMSAPKRVLVPHVDPKAAIKGTLHKPAVAPGAAKPAAAAGAPGAPGAAGKKEVKSENLSSTWKDDAAKKKGIPSRGATAVPGRGNFRSGPRGRRSNDRDARPESTFVAPTEFKVIEVHVPETITVAELAHKMSVKSSEVIKHLMKLGQMVTINQPLDQDTAMIVVEEMGHKAITAALDDPEAFTDDDVQGQQAEALPRAPVVTVMGHVDHGKTSLLDYIRRAKVAAGEAGGITQHIGAYHVETPRGMISFLDTPGHEAFTAMRARGAQATDIVILVVAADDGVMPQTKEAIKHAKAAGVPIVVAINKIDKADANMDRVKGELVTEEVIPEEFGGESPFVGVSARTGEGVDTLLEQVLLQAEVLELRAPVEALAKGLVIEAQLDKGRGPVATVLIQSGTLKTGDVVLAGSTYGRVRAMLDENGKPIKTAGPSIPVEIQGLTEVPQAGDEFMVMTDERRAREIATYRAGKFRNTKLAKQQASKLENMFSDISAGEVKMLPIIIKADVQGSQEALAQSLLKLSTDEVKVQLVYSGVGGISESDVNLAIASKAVLIGFNTRADAQARKQAENNGIDIRYYNIIYDAVDELKAAMSGMLTPDKKEEVIGTAEIRQVFKVSKIGSIAGCMVTAGIVRRTARLRLLRDNVVIFTGELDSLKRFKDDVKEVKESFECGLNIKNYNDIQEGDILEFFEIKEVARTL.

Residues 305-319 (KPAAAAGAPGAPGAA) show a composition bias toward low complexity. The disordered stretch occupies residues 305–376 (KPAAAAGAPG…NDRDARPEST (72 aa)). Positions 468–635 (PRAPVVTVMG…QVLLQAEVLE (168 aa)) constitute a tr-type G domain. The segment at 477 to 484 (GHVDHGKT) is G1. 477–484 (GHVDHGKT) serves as a coordination point for GTP. The interval 502-506 (GITQH) is G2. The G3 stretch occupies residues 523-526 (DTPG). GTP contacts are provided by residues 523-527 (DTPGH) and 577-580 (NKID). Positions 577–580 (NKID) are G4. The G5 stretch occupies residues 613–615 (SAR).

The protein belongs to the TRAFAC class translation factor GTPase superfamily. Classic translation factor GTPase family. IF-2 subfamily.

The protein localises to the cytoplasm. One of the essential components for the initiation of protein synthesis. Protects formylmethionyl-tRNA from spontaneous hydrolysis and promotes its binding to the 30S ribosomal subunits. Also involved in the hydrolysis of GTP during the formation of the 70S ribosomal complex. This chain is Translation initiation factor IF-2, found in Polaromonas sp. (strain JS666 / ATCC BAA-500).